Reading from the N-terminus, the 1376-residue chain is DNA-directed RNA polymerase subunit beta (1376 aa).

Positions 1357–1368 are enriched in polar residues; that stretch reads NSKTGRQTNPGT. Positions 1357 to 1376 are disordered; the sequence is NSKTGRQTNPGTRENLPAAE.

This sequence belongs to the RNA polymerase beta chain family. In terms of assembly, the RNAP catalytic core consists of 2 alpha, 1 beta, 1 beta' and 1 omega subunit. When a sigma factor is associated with the core the holoenzyme is formed, which can initiate transcription.

The catalysed reaction is RNA(n) + a ribonucleoside 5'-triphosphate = RNA(n+1) + diphosphate. Functionally, DNA-dependent RNA polymerase catalyzes the transcription of DNA into RNA using the four ribonucleoside triphosphates as substrates. The polypeptide is DNA-directed RNA polymerase subunit beta (Azorhizobium caulinodans (strain ATCC 43989 / DSM 5975 / JCM 20966 / LMG 6465 / NBRC 14845 / NCIMB 13405 / ORS 571)).